We begin with the raw amino-acid sequence, 251 residues long: MEIKQMLVPVSRYSVLCPYEMNPTEITFHNTYNDAPAINERNNVANNSTGTSFHIAVDDKEAIQLIPFNRNAWHAGDGTNGRGNRHSIGVEICYSQSGGARYRKAELNAVEVIAQLMIQFDIPISKVKTHQERNGKYCPHRMLDEGRVQWFKNQCANRASSIKNSNKTQETGKVEIIVNKFNKVVTYEFGTALVPEMLGMMDALGYESRIISYGDKQGLVRFETAYRQGNELDKATAWLDAKGLKYFYTKE.

An N-terminal signal peptide occupies residues 1–37 (MEIKQMLVPVSRYSVLCPYEMNPTEITFHNTYNDAPA). The region spanning 38 to 140 (INERNNVANN…QERNGKYCPH (103 aa)) is the N-acetylmuramoyl-L-alanine amidase domain.

It belongs to the N-acetylmuramoyl-L-alanine amidase 2 family.

It localises to the secreted. The enzyme catalyses Hydrolyzes the link between N-acetylmuramoyl residues and L-amino acid residues in certain cell-wall glycopeptides.. Autolysins are involved in some important biological processes such as cell separation, cell-wall turnover, competence for genetic transformation, formation of the flagella and sporulation. The sequence is that of N-acetylmuramoyl-L-alanine amidase CwlA (cwlA) from Bacillus sp.